The primary structure comprises 80 residues: Raniseptin-8 (80 aa).

The N-terminal stretch at 1–22 (MAFLKKSLFLVLFLGIVSLSIC) is a signal peptide. Positions 23-49 (EEEKREGEEEEKQEEENEELSEEELRE) are excised as a propeptide. Residues 27-46 (REGEEEEKQEEENEELSEEE) form a disordered region. Over residues 30–44 (EEEEKQEEENEELSE) the composition is skewed to acidic residues.

It belongs to the frog skin active peptide (FSAP) family. Dermaseptin subfamily. Expressed by the skin glands.

The protein localises to the secreted. In terms of biological role, has antibacterial activity. The polypeptide is Raniseptin-8 (Boana raniceps (Chaco tree frog)).